The primary structure comprises 409 residues: Elongation factor Tu, chloroplastic (409 aa).

Residues 10 to 214 enclose the tr-type G domain; it reads KPHVNIGTIG…AVDTYIPTPE (205 aa). A G1 region spans residues 19–26; it reads GHVDHGKT. 19–26 is a GTP binding site; sequence GHVDHGKT. Position 26 (Thr26) interacts with Mg(2+). Residues 60 to 64 are G2; the sequence is GITIN. Residues 81–84 form a G3 region; the sequence is DCPG. GTP-binding positions include 81-85 and 136-139; these read DCPGH and NKED. Residues 136 to 139 are G4; sequence NKED. Positions 174 to 176 are G5; that stretch reads SAL.

This sequence belongs to the TRAFAC class translation factor GTPase superfamily. Classic translation factor GTPase family. EF-Tu/EF-1A subfamily.

It is found in the plastid. It localises to the chloroplast. The catalysed reaction is GTP + H2O = GDP + phosphate + H(+). GTP hydrolase that promotes the GTP-dependent binding of aminoacyl-tRNA to the A-site of ribosomes during protein biosynthesis. The protein is Elongation factor Tu, chloroplastic (tufA) of Pyropia yezoensis (Susabi-nori).